The sequence spans 411 residues: MSIENKDNINKIVLAYSGGLDTSIIAKWLQDTYDAEVITFTADIGQGEEVEPARAKAEAMGIKHIHIEDLRAEFARDYVFPMFRANAIYEGEYLLGTSIARPLIAKRLVEIAKEHNADAISHGATGKGNDQVRFELGAIALAPDVKTIAPWREWDLSSRESLMAYAKEHNIPIDFAANKKKSPYSMDANLLHISYEGDILEDPYAEAEDDMWRWSVSPEQAPDTPEYLELEYEKGDIVAINGEKLEPYEVMIKLNELGGKHGIGRLDIVENRYVGMKSRGCYETPAGTIMLKAHRGMESLTLDREAAHLKDELMPRYAKIIYNGYWFSPERQMLQALIDKSQEYVTGTVRVKLYKGNVSVVGRKSPYSLFDEKIATFEDDAGAYDQKDAEGFIRLNGLRLSIEASRGRDLS.

Residues 15–23 (AYSGGLDTS) and A42 each bind ATP. L-citrulline is bound by residues Y93 and S98. G123 contacts ATP. L-aspartate is bound by residues T125, N129, and D130. N129 lines the L-citrulline pocket. Residues R133, S185, S194, E270, and Y282 each coordinate L-citrulline.

This sequence belongs to the argininosuccinate synthase family. Type 1 subfamily. Homotetramer.

Its subcellular location is the cytoplasm. The enzyme catalyses L-citrulline + L-aspartate + ATP = 2-(N(omega)-L-arginino)succinate + AMP + diphosphate + H(+). Its pathway is amino-acid biosynthesis; L-arginine biosynthesis; L-arginine from L-ornithine and carbamoyl phosphate: step 2/3. This Psychrobacter sp. (strain PRwf-1) protein is Argininosuccinate synthase.